Consider the following 192-residue polypeptide: Intraflagellar transport protein 22 (192 aa).

GTP-binding positions include 12 to 19 (GPQRTGKT) and 62 to 69 (WDVSGSVQ).

This sequence belongs to the small GTPase superfamily. Rab family. Component of the IFT complex B, composed of IFT88, IFT70, IFT52, IFT46, IFT27, IFT25 and IFT22.

The protein resides in the cell projection. It is found in the cilium. Its subcellular location is the flagellum. Its function is as follows. Component of the intraflagellar transport (IFT) complex B. Functions in regulating the cellular pool size of both complex A and complex B and thus plays a critical role in determining the cellular availability of IFT particles. This Chlamydomonas reinhardtii (Chlamydomonas smithii) protein is Intraflagellar transport protein 22 (FAP9).